A 131-amino-acid chain; its full sequence is Small ribosomal subunit protein uS8 (131 aa).

This sequence belongs to the universal ribosomal protein uS8 family. Part of the 30S ribosomal subunit. Contacts proteins S5 and S12.

In terms of biological role, one of the primary rRNA binding proteins, it binds directly to 16S rRNA central domain where it helps coordinate assembly of the platform of the 30S subunit. This is Small ribosomal subunit protein uS8 from Sulfurovum sp. (strain NBC37-1).